Consider the following 328-residue polypeptide: Glycerol-3-phosphate dehydrogenase [NAD(P)+] (328 aa).

NADPH is bound by residues tryptophan 15, arginine 35, arginine 36, and lysine 105. Sn-glycerol 3-phosphate-binding residues include lysine 105 and glycine 131. NADPH is bound at residue alanine 135. Sn-glycerol 3-phosphate contacts are provided by lysine 186, aspartate 239, serine 249, arginine 250, and asparagine 251. The Proton acceptor role is filled by lysine 186. Arginine 250 lines the NADPH pocket. NADPH is bound by residues valine 270 and glutamate 272.

Belongs to the NAD-dependent glycerol-3-phosphate dehydrogenase family.

The protein localises to the cytoplasm. The catalysed reaction is sn-glycerol 3-phosphate + NAD(+) = dihydroxyacetone phosphate + NADH + H(+). It carries out the reaction sn-glycerol 3-phosphate + NADP(+) = dihydroxyacetone phosphate + NADPH + H(+). It participates in membrane lipid metabolism; glycerophospholipid metabolism. Catalyzes the reduction of the glycolytic intermediate dihydroxyacetone phosphate (DHAP) to sn-glycerol 3-phosphate (G3P), the key precursor for phospholipid synthesis. This Deinococcus radiodurans (strain ATCC 13939 / DSM 20539 / JCM 16871 / CCUG 27074 / LMG 4051 / NBRC 15346 / NCIMB 9279 / VKM B-1422 / R1) protein is Glycerol-3-phosphate dehydrogenase [NAD(P)+].